A 254-amino-acid polypeptide reads, in one-letter code: Flavin-dependent thymidylate synthase (254 aa).

The region spanning 7 to 237 (LRVQLIARTE…PAVFADFEIY (231 aa)) is the ThyX domain. Residues Ser71, 95–97 (RHR), and Gln103 contribute to the FAD site. DUMP is bound by residues 92 to 95 (ELIR), 103 to 107 (QLSQR), and Arg176. A ThyX motif motif is present at residues 95 to 105 (RHRHFSYSQLS). FAD is bound by residues 192–194 (NYR) and His198. Residue Arg203 coordinates dUMP. Arg203 functions as the Involved in ionization of N3 of dUMP, leading to its activation in the catalytic mechanism.

Belongs to the thymidylate synthase ThyX family. As to quaternary structure, homotetramer. Requires FAD as cofactor.

It carries out the reaction dUMP + (6R)-5,10-methylene-5,6,7,8-tetrahydrofolate + NADPH + H(+) = dTMP + (6S)-5,6,7,8-tetrahydrofolate + NADP(+). Its pathway is pyrimidine metabolism; dTTP biosynthesis. Its function is as follows. Catalyzes the reductive methylation of 2'-deoxyuridine-5'-monophosphate (dUMP) to 2'-deoxythymidine-5'-monophosphate (dTMP) while utilizing 5,10-methylenetetrahydrofolate (mTHF) as the methyl donor, and NADPH and FADH(2) as the reductant. This chain is Flavin-dependent thymidylate synthase, found in Mycobacterium sp. (strain JLS).